Here is a 165-residue protein sequence, read N- to C-terminus: uncharacterized protein (165 aa).

A disordered region spans residues 51 to 102 (KQAAVEPGARGGERPTGSQAGVTDTPDSAPFQRRSRAPRAREQAAQAGLNQK). Over residues 66–76 (TGSQAGVTDTP) the composition is skewed to polar residues.

This is an uncharacterized protein from Mus musculus (Mouse).